The chain runs to 528 residues: Na(+)/H(+) antiporter NhaB (528 aa).

The next 11 helical transmembrane spans lie at 23–43, 45–65, 90–110, 136–156, 204–224, 237–257, 305–325, 350–370, 392–412, 450–470, and 479–499; these read VAIIAFLIINPIVFFLINPFV, GWLLVAEFIFTLAMALKCYPL, LVANIEVLLLLVFMVAGIYFM, CFAAAFLSAFLDALTVIAVVI, LLMHAGVGTALGGVTTMVGEP, FGEFLIRMSPVTLPVFICGLI, GIIAVWLIVALALHLAAVGLI, EEALPFTALLAVFFSIVAVII, LALFYVANGLLSMVSDNVFVG, ATPNGQAAFLFLLTSALAPLI, and VMALPYTVVLAIVGLMGIMFF.

It belongs to the NhaB Na(+)/H(+) (TC 2.A.34) antiporter family.

The protein localises to the cell inner membrane. The enzyme catalyses 2 Na(+)(in) + 3 H(+)(out) = 2 Na(+)(out) + 3 H(+)(in). Its function is as follows. Na(+)/H(+) antiporter that extrudes sodium in exchange for external protons. Can also transport lithium and potassium. This Vibrio parahaemolyticus serotype O3:K6 (strain RIMD 2210633) protein is Na(+)/H(+) antiporter NhaB.